The following is a 166-amino-acid chain: Large ribosomal subunit protein mL41 (166 aa).

The transit peptide at 1-26 (MNNCIKVVPIALRCQQRTISTSSVLE) directs the protein to the mitochondrion. The interval 136–166 (KDGSAKEPSVNEQLTPEEALQRARKTGSDIF) is disordered.

Belongs to the mitochondrion-specific ribosomal protein mL41 family. Component of the mitochondrial ribosome large subunit (39S) which comprises a 16S rRNA and about 50 distinct proteins.

It is found in the mitochondrion. This Drosophila melanogaster (Fruit fly) protein is Large ribosomal subunit protein mL41 (mRpL41).